The chain runs to 651 residues: Bromodomain-containing protein 7 (651 aa).

Lys21 is covalently cross-linked (Glycyl lysine isopeptide (Lys-Gly) (interchain with G-Cter in SUMO2)). Residues 35 to 45 (TELSTGSSGHD) are compositionally biased toward polar residues. The segment at 35 to 132 (TELSTGSSGH…SSLAKQEEVE (98 aa)) is disordered. Basic and acidic residues predominate over residues 47-57 (SLFEDKNDHDK). Lys52 participates in a covalent cross-link: Glycyl lysine isopeptide (Lys-Gly) (interchain with G-Cter in SUMO2). Over residues 58–69 (HKDRKRKKRKKG) the composition is skewed to basic residues. Positions 65–96 (KRKKGEKQIPGEEKGRKRRRVKEDKKKRDRDR) match the Nuclear localization signal motif. The span at 70 to 106 (EKQIPGEEKGRKRRRVKEDKKKRDRDRVENEAEKDLQ) shows a compositional bias: basic and acidic residues. Residues Lys127, Lys186, Lys197, Lys201, Lys212, and Lys241 each participate in a glycyl lysine isopeptide (Lys-Gly) (interchain with G-Cter in SUMO2) cross-link. Residues 131-235 (VEQTPLQEAL…HSGMKILSQE (105 aa)) enclose the Bromo domain. The disordered stretch occupies residues 253 to 312 (TRKQKDGTDTSQSGEDGGCWQREREDSGDAEAHASKSPSKENKKKDNDMLEDKFKSNNLE). Residues 273 to 312 (QREREDSGDAEAHASKSPSKENKKKDNDMLEDKFKSNNLE) are compositionally biased toward basic and acidic residues. Phosphoserine occurs at positions 279 and 289. Glycyl lysine isopeptide (Lys-Gly) (interchain with G-Cter in SUMO2) cross-links involve residues Lys305 and Lys307. Residue Lys328 is modified to N6-acetyllysine. Residue Lys344 forms a Glycyl lysine isopeptide (Lys-Gly) (interchain with G-Cter in SUMO2) linkage. The residue at position 380 (Ser380) is a Phosphoserine. Residue Lys389 forms a Glycyl lysine isopeptide (Lys-Gly) (interchain with G-Cter in SUMO2) linkage. Residue Ser482 is modified to Phosphoserine. A Phosphothreonine modification is found at Thr514. Residues 536–567 (SEEAEIFQKKLDETTRLLRELQEAQNERLSTR) are a coiled coil. The residue at position 621 (Ser621) is a Phosphoserine.

In terms of assembly, interacts with TRIM24, PTPN13 and DVL1. Identified in a complex with SMARCA4/BRG1, SMARCC1/BAF155, SMARCE1/BAF57, DPF2/BAF45D and ARID2, subunits of the SWI/SNF-B (PBAF) chromatin remodeling complex. Interacts with IRF2 and HNRPUL1. Interacts (via N-terminus) with TP53. Interacts (via C-terminus) with EP300. Interacts with BRCA1. Interacts (via bromo domain) with histone H3 (via N-terminus) acetylated at 'Lys-14' (H3K14ac). Has low affinity for histone H3 acetylated at 'Lys-9' (H3K9ac). Has the highest affinity for histone H3 that is acetylated both at 'Lys-9' (H3K9ac) and at 'Lys-14' (H3K14ac). Has very low affinity for non-acetylated histone H3. Interacts (via bromo domain) with histone H4 (via N-terminus) acetylated at 'Lys-8' (H3K8ac) (in vitro).

The protein resides in the nucleus. It localises to the chromosome. Its function is as follows. Acts both as coactivator and as corepressor. May play a role in chromatin remodeling. Activator of the Wnt signaling pathway in a DVL1-dependent manner by negatively regulating the GSK3B phosphotransferase activity. Induces dephosphorylation of GSK3B at 'Tyr-216'. Down-regulates TRIM24-mediated activation of transcriptional activation by AR. Transcriptional corepressor that down-regulates the expression of target genes. Binds to target promoters, leading to increased histone H3 acetylation at 'Lys-9' (H3K9ac). Binds to the ESR1 promoter. Recruits BRCA1 and POU2F1 to the ESR1 promoter. Coactivator for TP53-mediated activation of transcription of a set of target genes. Required for TP53-mediated cell-cycle arrest in response to oncogene activation. Promotes acetylation of TP53 at 'Lys-382', and thereby promotes efficient recruitment of TP53 to target promoters. Inhibits cell cycle progression from G1 to S phase. The polypeptide is Bromodomain-containing protein 7 (BRD7) (Pongo abelii (Sumatran orangutan)).